A 185-amino-acid chain; its full sequence is Ribosome-recycling factor (185 aa).

It belongs to the RRF family.

It is found in the cytoplasm. Its function is as follows. Responsible for the release of ribosomes from messenger RNA at the termination of protein biosynthesis. May increase the efficiency of translation by recycling ribosomes from one round of translation to another. This chain is Ribosome-recycling factor, found in Tolumonas auensis (strain DSM 9187 / NBRC 110442 / TA 4).